A 630-amino-acid chain; its full sequence is UvrABC system protein C (630 aa).

Residues 1–96 form a disordered region; it reads MGAEGLQGEG…GEAHRRGGTG (96 aa). Low complexity predominate over residues 9-28; that stretch reads EGEVPPQGAGVPGQVQVGVH. In terms of domain architecture, GIY-YIG spans 52 to 125; it reads DPRGLPVEAG…IKAHRPLYNV (74 aa). Basic and acidic residues predominate over residues 75 to 91; the sequence is RPGEKLLPRRGQGEAHR. The region spanning 234–269 is the UVR domain; it reads DGLLQELEAKMREAARRLEFERAAEIRDQMEALRAF.

Belongs to the UvrC family. Interacts with UvrB in an incision complex.

It is found in the cytoplasm. In terms of biological role, the UvrABC repair system catalyzes the recognition and processing of DNA lesions. UvrC both incises the 5' and 3' sides of the lesion. The N-terminal half is responsible for the 3' incision and the C-terminal half is responsible for the 5' incision. This chain is UvrABC system protein C, found in Thermus thermophilus (strain ATCC BAA-163 / DSM 7039 / HB27).